The sequence spans 89 residues: Small ribosomal subunit protein uS17 (89 aa).

The protein belongs to the universal ribosomal protein uS17 family. In terms of assembly, part of the 30S ribosomal subunit.

Functionally, one of the primary rRNA binding proteins, it binds specifically to the 5'-end of 16S ribosomal RNA. This chain is Small ribosomal subunit protein uS17, found in Aromatoleum aromaticum (strain DSM 19018 / LMG 30748 / EbN1) (Azoarcus sp. (strain EbN1)).